Here is a 167-residue protein sequence, read N- to C-terminus: N5-carboxyaminoimidazole ribonucleotide mutase (167 aa).

3 residues coordinate substrate: serine 11, aspartate 14, and arginine 41.

This sequence belongs to the AIR carboxylase family. Class I subfamily.

The enzyme catalyses 5-carboxyamino-1-(5-phospho-D-ribosyl)imidazole + H(+) = 5-amino-1-(5-phospho-D-ribosyl)imidazole-4-carboxylate. It participates in purine metabolism; IMP biosynthesis via de novo pathway; 5-amino-1-(5-phospho-D-ribosyl)imidazole-4-carboxylate from 5-amino-1-(5-phospho-D-ribosyl)imidazole (N5-CAIR route): step 2/2. In terms of biological role, catalyzes the conversion of N5-carboxyaminoimidazole ribonucleotide (N5-CAIR) to 4-carboxy-5-aminoimidazole ribonucleotide (CAIR). The sequence is that of N5-carboxyaminoimidazole ribonucleotide mutase from Aquifex aeolicus (strain VF5).